We begin with the raw amino-acid sequence, 1065 residues long: Presequence protease, mitochondrial (1065 aa).

The N-terminal 42 residues, 1 to 42, are a transit peptide targeting the mitochondrion; that stretch reads MLRSFSGAGKCKCRIPVSRQPVCGRSLRISSTLTPWNQSRRA. Zn(2+) is bound at residue H117. Catalysis depends on E120, which acts as the Proton acceptor. Zn(2+) is bound at residue H121. Residue E193 is part of the active site. Residue E230 participates in Zn(2+) binding.

It belongs to the peptidase M16 family. PreP subfamily. In terms of assembly, monomer and homodimer; homodimerization is induced by binding of the substrate. Zn(2+) serves as cofactor.

The protein resides in the mitochondrion intermembrane space. Its subcellular location is the mitochondrion matrix. Degrades mitochondrial transit peptides after their cleavage in the intermembrane space or in the matrix, and presequence peptides; clearance of these peptides is required to keep the presequence processing machinery running. Preferentially cleaves the N-terminal side of paired basic amino acid residues. Also degrades other unstructured peptides. May function as an ATP-dependent peptidase as opposed to a metalloendopeptidase. In Aspergillus fumigatus (strain ATCC MYA-4609 / CBS 101355 / FGSC A1100 / Af293) (Neosartorya fumigata), this protein is Presequence protease, mitochondrial (cym1).